The primary structure comprises 1032 residues: GPI ethanolamine phosphate transferase 1 (1032 aa).

Over 1–6 the chain is Cytoplasmic; the sequence is MARLGR. A helical membrane pass occupies residues 7 to 27; it reads FGFLALAVVFHLIYAYSIFDI. Residues 28–468 lie on the Lumenal side of the membrane; it reads YFVSPIVSGM…LQTYDWLFLR (441 aa). Asparagine 150 and asparagine 435 each carry an N-linked (GlcNAc...) asparagine glycan. The helical transmembrane segment at 469–489 threads the bilayer; the sequence is TIITFGYLGWIAYALTTVIDL. Over 490–500 the chain is Cytoplasmic; it reads HVLHRTSDSKR. A helical membrane pass occupies residues 501–521; it reads TVGSTIFFTSILAALFSVLLY. Residues 522–523 are Lumenal-facing; the sequence is QK. Residues 524–544 form a helical membrane-spanning segment; the sequence is SSWQYYVYGAFPIFFWEEVFA. The Cytoplasmic portion of the chain corresponds to 545–564; it reads RRKALIAGREILLGHVRSFG. The chain crosses the membrane as a helical span at residues 565–585; sequence GYIASGFQLVAFVAVLEALLM. Residues 586–596 lie on the Lumenal side of the membrane; the sequence is RHQVQSYFHRE. Residues 597 to 617 traverse the membrane as a helical segment; it reads IYTVCFVLGSFWPILYGVDFV. Residues 618 to 622 are Cytoplasmic-facing; that stretch reads RQNTV. A helical transmembrane segment spans residues 623 to 643; that stretch reads LSATWAVGCSLMSTFTLLPVI. At 644 to 647 the chain is on the lumenal side; it reads KVEN. Residues 648-668 traverse the membrane as a helical segment; that stretch reads INTITYGALLMFFTGLFYLLF. The Cytoplasmic segment spans residues 669-688; that stretch reads EDTILKHSKSSGHAPGAISS. A helical membrane pass occupies residues 689 to 709; the sequence is LGSRVIMGMQVGMVLLALIVT. Residues 710-722 are Lumenal-facing; the sequence is RSSVSSLQAKQGL. A helical transmembrane segment spans residues 723 to 743; sequence PFGNQVVGWFVLVASLVLPFF. The Cytoplasmic segment spans residues 744–766; the sequence is HRLYPNSHYLHRLMVLFLTFSPT. A helical transmembrane segment spans residues 767-787; the sequence is FIILTISYEGLFYFVFCMTLV. The Lumenal portion of the chain corresponds to 788–841; the sequence is TWVRLEHAIYVYTARSSAHYGGNNTVPKKPGLNATAVIDGQEYRYRRLGLADTR. N-linked (GlcNAc...) asparagine glycans are attached at residues asparagine 810 and asparagine 820. The helical transmembrane segment at 842–862 threads the bilayer; it reads VALFFFFLLQSAFFSTGNIAS. Topologically, residues 863–884 are cytoplasmic; that stretch reads VSSFSLESVFRLIPVFSPFSQS. Residues 885–905 traverse the membrane as a helical segment; sequence ALLILKLLIPFAIISANLGIL. The Lumenal segment spans residues 906 to 914; that stretch reads NRRLEVAPS. A helical transmembrane segment spans residues 915–935; the sequence is ALFMVVMSISDVMTLNFFYMV. Topologically, residues 936-951 are cytoplasmic; that stretch reads RDEGSWLDIGTTISHF. The chain crosses the membrane as a helical span at residues 952 to 972; that stretch reads LIASFLCTFVAGLEFLSEVFI. At 973–1032 the chain is on the lumenal side; it reads SGVDFGPTTKAIGASITKTVGGTAGSDVVDSQSGPEDAANSKKAEGLEGSETIRQNGGSV. The interval 994–1032 is disordered; sequence GTAGSDVVDSQSGPEDAANSKKAEGLEGSETIRQNGGSV.

Belongs to the PIGG/PIGN/PIGO family. PIGN subfamily.

Its subcellular location is the endoplasmic reticulum membrane. It functions in the pathway glycolipid biosynthesis; glycosylphosphatidylinositol-anchor biosynthesis. Ethanolamine phosphate transferase involved in glycosylphosphatidylinositol-anchor biosynthesis. Transfers ethanolamine phosphate to the first alpha-1,4-linked mannose of the glycosylphosphatidylinositol precursor of GPI-anchor. This chain is GPI ethanolamine phosphate transferase 1 (mcd4), found in Aspergillus fumigatus (strain ATCC MYA-4609 / CBS 101355 / FGSC A1100 / Af293) (Neosartorya fumigata).